The chain runs to 188 residues: MKLIVGLGNPGTKFVNTRHNVGFAVVDSFLSQNKYQILKEDKTDHIYQINFNHHQSLLIKPQTYMNLSGEVVKKIINKYRIKIENILVIVDDIYLDEGKLKLKMQGGHGGHNGLRNIIDRLGTKQFKRLKIGVSLDSCMPLDQYLLTPVNASSQKNILKNINIINKIIFNFIQDVDFNILMNGYNSKL.

F14 serves as a coordination point for tRNA. Residue H19 is the Proton acceptor of the active site. Positions 64, 66, and 112 each coordinate tRNA.

The protein belongs to the PTH family. In terms of assembly, monomer.

The protein resides in the cytoplasm. It carries out the reaction an N-acyl-L-alpha-aminoacyl-tRNA + H2O = an N-acyl-L-amino acid + a tRNA + H(+). Its function is as follows. Hydrolyzes ribosome-free peptidyl-tRNAs (with 1 or more amino acids incorporated), which drop off the ribosome during protein synthesis, or as a result of ribosome stalling. In terms of biological role, catalyzes the release of premature peptidyl moieties from peptidyl-tRNA molecules trapped in stalled 50S ribosomal subunits, and thus maintains levels of free tRNAs and 50S ribosomes. The chain is Peptidyl-tRNA hydrolase from Onion yellows phytoplasma (strain OY-M).